The chain runs to 300 residues: Bifunctional protein FolD 2 (300 aa).

Residues 165 to 167, serine 190, and isoleucine 231 contribute to the NADP(+) site; that span reads GRS.

The protein belongs to the tetrahydrofolate dehydrogenase/cyclohydrolase family. In terms of assembly, homodimer.

It carries out the reaction (6R)-5,10-methylene-5,6,7,8-tetrahydrofolate + NADP(+) = (6R)-5,10-methenyltetrahydrofolate + NADPH. The catalysed reaction is (6R)-5,10-methenyltetrahydrofolate + H2O = (6R)-10-formyltetrahydrofolate + H(+). It participates in one-carbon metabolism; tetrahydrofolate interconversion. Catalyzes the oxidation of 5,10-methylenetetrahydrofolate to 5,10-methenyltetrahydrofolate and then the hydrolysis of 5,10-methenyltetrahydrofolate to 10-formyltetrahydrofolate. This is Bifunctional protein FolD 2 from Pseudomonas savastanoi pv. phaseolicola (strain 1448A / Race 6) (Pseudomonas syringae pv. phaseolicola (strain 1448A / Race 6)).